Here is a 319-residue protein sequence, read N- to C-terminus: ATP-dependent 6-phosphofructokinase 1 (319 aa).

Residue Gly-11 participates in ATP binding. Residue 21 to 25 (RAVTR) coordinates ADP. Residues 72–73 (RC) and 102–105 (GDGS) contribute to the ATP site. Asp-103 contacts Mg(2+). 125–127 (TID) lines the substrate pocket. Asp-127 serves as the catalytic Proton acceptor. ADP is bound at residue Arg-154. Residues Arg-162 and 169–171 (MGR) each bind substrate. Residues 185–187 (GAE) and 213–215 (KTH) contribute to the ADP site. Substrate-binding positions include Glu-222, Arg-243, and 249–252 (HIQR).

It belongs to the phosphofructokinase type A (PFKA) family. ATP-dependent PFK group I subfamily. Prokaryotic clade 'B1' sub-subfamily. As to quaternary structure, homotetramer. Mg(2+) serves as cofactor.

Its subcellular location is the cytoplasm. The enzyme catalyses beta-D-fructose 6-phosphate + ATP = beta-D-fructose 1,6-bisphosphate + ADP + H(+). The protein operates within carbohydrate degradation; glycolysis; D-glyceraldehyde 3-phosphate and glycerone phosphate from D-glucose: step 3/4. Allosterically activated by ADP and other diphosphonucleosides, and allosterically inhibited by phosphoenolpyruvate. Functionally, catalyzes the phosphorylation of D-fructose 6-phosphate to fructose 1,6-bisphosphate by ATP, the first committing step of glycolysis. This is ATP-dependent 6-phosphofructokinase 1 from Clostridium perfringens (strain 13 / Type A).